A 40-amino-acid chain; its full sequence is Large ribosomal subunit protein bL36 (40 aa).

Belongs to the bacterial ribosomal protein bL36 family.

The chain is Large ribosomal subunit protein bL36 from Corynebacterium aurimucosum (strain ATCC 700975 / DSM 44827 / CIP 107346 / CN-1) (Corynebacterium nigricans).